Reading from the N-terminus, the 291-residue chain is 33 kDa chaperonin (291 aa).

2 disulfides stabilise this stretch: C235-C237 and C268-C271.

This sequence belongs to the HSP33 family. Post-translationally, under oxidizing conditions two disulfide bonds are formed involving the reactive cysteines. Under reducing conditions zinc is bound to the reactive cysteines and the protein is inactive.

It is found in the cytoplasm. Functionally, redox regulated molecular chaperone. Protects both thermally unfolding and oxidatively damaged proteins from irreversible aggregation. Plays an important role in the bacterial defense system toward oxidative stress. The chain is 33 kDa chaperonin from Bacillus velezensis (strain DSM 23117 / BGSC 10A6 / LMG 26770 / FZB42) (Bacillus amyloliquefaciens subsp. plantarum).